The sequence spans 2254 residues: MANCRPLPIGQLPNRIFDTPRLTPGWVWACTSEATFKLEWLQDPVVIRPPDVFVAQGVVDDFFRPKRVLQGDPQLIAQVLLGDANGPLVGPVSMQQLTSLLHEVSQALSDHKHPLANRYTRASLQRYADTLSNYIPLVDILTGPKDLTPRDVLEQLAAGREWECVPDSALKKVFRDMWQYICEGCDSVYIKLQDVKRKMPHIDTTVLKQFIITLTDTISMATALDTKTWLAHILGWLKPTCLVMIMQQHVNSPQGWAATLTALAELYYGIMPLTETLGSVASWVTDKFADMATSTWGKFKSWWDSLYTPQAGNDLIILGGVVGLVYFMVFGDAPTQMFTKKLMRVCGFITSTVAAIKAAMWIVDYFKQREHEHQVRITLARWAALQEVIKQNRCAGLSEVTKLKECCEVLLNEVTELMYKLGASPLAGLIRSTSDVIQTTINELAQLMAYDTQRKPPAMVVFGGPPGIGKTRLVEALAKQLGEVSHFTMTVDHYDTYTGNTVAIWDEFDVDSKQAFIEATIGIVNCAPYPLNCDRPEAKGRVFTSKYVLATTNCPTPVMPDHPRAMAFWRRITFIDVTAPTIEQWLVDNPGRKAPTSLFKDDFSHLQCSVRGYTAYDEKGNTLSGKVARARYVSVNNLLDLIKEKYNSEAADVKHLWFTVPQAIHKQARDIILGWLRFHSYPNTVADNIPLSEVRDPTCFGYVVISDVDPPRHVAEHVAHIEVESILRTDIVGLLREGGGGLFRALKVKSAPRNCIINKVMMQAHHTTLQVLTSQEPHPPNLPRPRRLVFVESPIDIISALRHHVGFCTIPGIVKLITSGVGLGVENLGNFLQSIAGNVRFPLQSECSLLRTPSGDVLFYTSGQAAVWATPARFPIVTPGEASVGKEVCSESSWWDILKALFSTLVVAFGPIATLVLTAHNLAYLNTRENTLSEAKGKNKRGRGARRAIALRDDEYDEWQDIIRDWRKEMTVQQFLDLKERALSGASDPDSQRYNAWLELRAKRLSAGAYQHAVVDIIGKSGHRREVIRTQVMRAPREPKGDTYDSEGRGYVVPMTAQEKHTGWAVHIGNGRLVTCTHVANMCDRVAEVEFKVAETDRDTCIITAPLGHLPSVALGNGPPAFYTTNFHPIRVLDEGSWDTTTTRVTGWRVVINNGTTTAPGDCGQPYLNARRQLVGVHAATSTCGVKKLVSRVQTKKTAKATFPWKGLPVTTMPDAGGLPTGTRYHRSIAWPKLLPEETHAPAPYGVNDPRHPFSQHQMIANNLQPYINTPVALDQTLLQRAVKHTKGYLDQIIGTHRSPNLTYAAAVESMAHDTACGPNLPGRKKDYMTDQGEPIGPLKQMLEEAWDMAHRGVPRRHEYKLALKDELRPIEKNDQGKKRLLWGCDAGVSMIANAVFKPVTERLVDTVPMHPVAVGICMDSPQIEQMNQALTGRVLYCLDYSKWDSTQNPAVTCASVDILASYAEDTPLSSAAIATLCSPAVGRLDDIGLTVTSGLPSGMPFTSVINSVNHMIYFAMAVLEAYEEFKVPYMGNIFDNETIYTYGDDCVYGLTPATASIMPVVVKNLTSYGLVPTAADKSQSIEPTDTPVFLKRTFSQTPFGLRALLDETSLARQCYWVKANRTTDLFEPAAVDVDIRKNQLEVMLAYASQHPRSVFDKLAGMAEVTASAEGYQLVNVNWANAVATYNAWYGGTDGGRAPTNEDEEPEVFVMEAPAPTRSVASNPEGTQNSNESRPVQPAGPMPVAAAQALEMAVATGQINDTIPSVVRETFSTYTNVTWTTRQPTGTLLARMSLGPGLNPYTLHLSAMWAGWGGSFEIKVIISGSGMYAGKLLCALIPPGVDPSAVDQPGAFPHALVDARITDGVTFTLGDVRAVDYHETGVGGAIASLALYVYQPLINPFETAVSAAMVTIETRPGPDFGFTLLKPPNQAMEVGFDPRSLLPRTARTLRGNRFGRPITAVVIVGVAQQINRHFSAEGTTLGWSTAPIGPCVARVNGKHTDNTGRAVFQLGPLSNGPLYPNIINHYPDVAASTIFNTGTAVNDNTTGGGGPMVIFNDVGDVVEDVAYQMRFIASHATSQSPTLIDQINATSMAVCSFGNSRADLNQNQLNVGIELTYTCGNTAINGIVTSFMDRQYTFGPQGPNNIMLWVESVLGTHTGNNTVYSSQPDTVSAALQGQPFNIPDGYMAVWNVNADSADFQIGLRRDGYFVTNGAIGTRMVISEDTTFSFNGMYTLTTPLIGPSGTSGRSIHSSR.

The SF3 helicase domain occupies 438–592; the sequence is QTTINELAQL…EQWLVDNPGR (155 aa). 464 to 471 is a binding site for ATP; sequence GPPGIGKT. Tyrosine 956 carries the post-translational modification O-(5'-phospho-RNA)-tyrosine. The 156-residue stretch at 1041 to 1196 folds into the Peptidase C24 domain; the sequence is GDTYDSEGRG…KKLVSRVQTK (156 aa). Residues histidine 1078, aspartate 1099, and cysteine 1163 each act as for 3CLpro activity in the active site. The 126-residue stretch at 1434 to 1559 folds into the RdRp catalytic domain; that stretch reads RVLYCLDYSK…GLTPATASIM (126 aa). Residues 1714–1742 are disordered; sequence PAPTRSVASNPEGTQNSNESRPVQPAGPM. Positions 1719–1734 are enriched in polar residues; sequence SVASNPEGTQNSNESR.

As to quaternary structure, homodimer. Homomultimer. In terms of assembly, interacts with host IEF4E; this interaction plays a role in translation of viral proteins. Specific enzymatic cleavages in vivo yield mature proteins. Pro-Pol is first autocatalytically cleaved, then processes the whole polyprotein. In terms of processing, VPg is uridylylated by the polymerase and is covalently attached to the 5'-end of the polyadenylated genomic and subgenomic RNAs. This uridylylated form acts as a nucleotide-peptide primer for the polymerase.

It localises to the virion. Its subcellular location is the host cytoplasm. It catalyses the reaction a ribonucleoside 5'-triphosphate + H2O = a ribonucleoside 5'-diphosphate + phosphate + H(+). It carries out the reaction RNA(n) + a ribonucleoside 5'-triphosphate = RNA(n+1) + diphosphate. The enzyme catalyses Endopeptidase with a preference for cleavage when the P1 position is occupied by Glu-|-Xaa and the P1' position is occupied by Gly-|-Yaa.. Functionally, together with NTPase and NS4, initiates the formation of the replication complex. Induces the proliferation of the host smooth ER membranes forming long tubular structures. These remodeled membranes probably form the viral factories that contain the replication complex. Its function is as follows. Displays NTPase activity, but no helicase activity. Induces the formation of convoluted membranes derived from the host ER. These remodeled membranes probably form the viral factories that contain the replication complex. Together with NS2 and NS4, initiates the formation of the replication complex. Probable key protein responsible for the formation of membrane alterations by the virus. Induces the formation of convoluted membranes derived from the host ER. These remodeled membranes probably form the viral factories that contain the replication complex. Together with NS2 and NTPase, initiates the formation of the replication complex. In terms of biological role, viral genome-linked protein is covalently linked to the 5'-end of the positive-strand, negative-strand genomic RNAs and subgenomic RNA. Acts as a genome-linked replication primer. May recruit ribosome to viral RNA thereby promoting viral proteins translation. Interacts with host translation initiation complex to allow the translation of viral proteins. Functionally, protease-polymerase p76 processes the polyprotein: Pro-Pol is first released by autocleavage, then all other proteins are cleaved. Cleaves host translation initiation factor eIF4G1, eIF4G2 and PABP1 thereby inducing a shutdown of host protein synthesis. This shutdown may not prevent viral mRNA from being translated since viral Vpg replaces the cap. It is also an RNA-directed RNA polymerase which replicates genomic and antigenomic viral RNA by recognizing specific signals. Also transcribes a subgenomic mRNA by initiating RNA synthesis internally on antigenomic RNA. This sgRNA codes for structural proteins. Catalyzes the covalent attachment VPg with viral RNAs. Its function is as follows. Capsid protein self assembles to form an icosahedral capsid with a T=3 symmetry, about 38 nm in diameter, and consisting of 180 capsid proteins. The capsid encapsulate the genomic RNA and VP2 proteins. Attaches virion to target cells, inducing endocytosis of the viral particle. Acidification of the endosome induces conformational change of capsid protein thereby injecting virus genomic RNA into host cytoplasm. This chain is Genome polyprotein, found in Porcine enteric sapovirus (isolate Swine/United States/Cowden/1980) (Sw/SV/Cowden/1980/US).